The primary structure comprises 159 residues: Major strawberry allergen Fra a 1-C (159 aa).

It belongs to the BetVI family. As to quaternary structure, monomer.

This Fragaria ananassa (Strawberry) protein is Major strawberry allergen Fra a 1-C.